The chain runs to 282 residues: 2-dehydro-3-deoxyphosphooctonate aldolase (282 aa).

This sequence belongs to the KdsA family.

It localises to the cytoplasm. It carries out the reaction D-arabinose 5-phosphate + phosphoenolpyruvate + H2O = 3-deoxy-alpha-D-manno-2-octulosonate-8-phosphate + phosphate. The protein operates within carbohydrate biosynthesis; 3-deoxy-D-manno-octulosonate biosynthesis; 3-deoxy-D-manno-octulosonate from D-ribulose 5-phosphate: step 2/3. It participates in bacterial outer membrane biogenesis; lipopolysaccharide biosynthesis. The polypeptide is 2-dehydro-3-deoxyphosphooctonate aldolase (Shewanella oneidensis (strain ATCC 700550 / JCM 31522 / CIP 106686 / LMG 19005 / NCIMB 14063 / MR-1)).